The chain runs to 152 residues: Deoxyuridine 5'-triphosphate nucleotidohydrolase (152 aa).

Substrate-binding positions include 71–73 (RSG), asparagine 84, 88–90 (LID), and methionine 98.

The protein belongs to the dUTPase family. Requires Mg(2+) as cofactor.

The catalysed reaction is dUTP + H2O = dUMP + diphosphate + H(+). Its pathway is pyrimidine metabolism; dUMP biosynthesis; dUMP from dCTP (dUTP route): step 2/2. This enzyme is involved in nucleotide metabolism: it produces dUMP, the immediate precursor of thymidine nucleotides and it decreases the intracellular concentration of dUTP so that uracil cannot be incorporated into DNA. In Haemophilus ducreyi (strain 35000HP / ATCC 700724), this protein is Deoxyuridine 5'-triphosphate nucleotidohydrolase.